The primary structure comprises 371 residues: MKQKILLCSDLDRTLLPNGHQAESPQARLRLQRLAQRPGIILAYVSGRHKALIQSAIREYDLPLPDFAIGDVGTTIYQITDNQWHPWEDWSKEISQDWQGINQAGLAKLFADITPLRLQEPEKQNRYKLSYYAPPELDWENLIPQLAQRLQAQGIQASFIWSVDETAQIGLLDILPKRANKLHAIRFLMERQHFDKSHTVFAGDSGNDLEVLASGLQAILVRNAQEEVRQEALRRLPPEHSQQLYLARGGFMGLNGYYSAGVLEGLAHFFPETRAWMETGREESAEEETAQSCAIYRSCKRNDSYLYVESQDDFSRVPGKLLEMLGKLEFVMRLELRPEISLAQANTREVMQMLREKGYFLQLSSREYRRS.

Positions 1–288 (MKQKILLCSD…TGREESAEEE (288 aa)) are HAD-like hydrolase. The 81-residue stretch at 291–371 (QSCAIYRSCK…QLSSREYRRS (81 aa)) folds into the YcgL domain.

The protein in the N-terminal section; belongs to the HAD-like hydrolase superfamily.

The protein is Putative HAD-like hydrolase Noc_2718 of Nitrosococcus oceani (strain ATCC 19707 / BCRC 17464 / JCM 30415 / NCIMB 11848 / C-107).